We begin with the raw amino-acid sequence, 98 residues long: NADH-ubiquinone oxidoreductase chain 4L (98 aa).

The next 3 helical transmembrane spans lie at 1–21 (MVLIKLNIIVAFMLALSGVLI), 36–56 (MMLSLFIFMAAMITHFHMFSI), and 61–81 (LILLVFSACEAGVGLALLVSI).

The protein belongs to the complex I subunit 4L family.

It localises to the mitochondrion membrane. The catalysed reaction is a ubiquinone + NADH + 5 H(+)(in) = a ubiquinol + NAD(+) + 4 H(+)(out). Its function is as follows. Core subunit of the mitochondrial membrane respiratory chain NADH dehydrogenase (Complex I) which catalyzes electron transfer from NADH through the respiratory chain, using ubiquinone as an electron acceptor. Part of the enzyme membrane arm which is embedded in the lipid bilayer and involved in proton translocation. The sequence is that of NADH-ubiquinone oxidoreductase chain 4L (MT-ND4L) from Didelphis virginiana (North American opossum).